Consider the following 202-residue polypeptide: Dephospho-CoA kinase (202 aa).

The DPCK domain occupies 4–201 (VVALTGGIAS…QKYLAMSRQN (198 aa)). An ATP-binding site is contributed by 12 to 17 (ASGKTT).

This sequence belongs to the CoaE family.

Its subcellular location is the cytoplasm. The enzyme catalyses 3'-dephospho-CoA + ATP = ADP + CoA + H(+). The protein operates within cofactor biosynthesis; coenzyme A biosynthesis; CoA from (R)-pantothenate: step 5/5. Its function is as follows. Catalyzes the phosphorylation of the 3'-hydroxyl group of dephosphocoenzyme A to form coenzyme A. This chain is Dephospho-CoA kinase, found in Vibrio cholerae serotype O1 (strain ATCC 39315 / El Tor Inaba N16961).